Here is a 280-residue protein sequence, read N- to C-terminus: MNIIEVENVSFKYGNSKAYSLRDVNLNVKKGEFLGIIGPSGSGKSTFCLTLNGLIPHSINGEFEGNVFVDGLNTREHSVAELSTRVGLVFQNPDSQLFNMTVLEEVAFALENLGVEREEMWRRIRWALKLVKLWDKREEFPPNLSGGEKQRLAIASVLVMKPKVLVLDEPTSQLDPLGREEVLSLVRLLNKEEKITIILVEHNTDFLLEHADRIVVFDGGRVVMEGKPEEVFENVEFLERIGIRIPTRVKIGYELKKRGITRRAVLSYEEIIAEIAKQLR.

The 241-residue stretch at 4-244 (IEVENVSFKY…VEFLERIGIR (241 aa)) folds into the ABC transporter domain. 38 to 45 (GPSGSGKS) lines the ATP pocket.

It belongs to the ABC transporter superfamily.

The protein localises to the cell membrane. Functionally, probably part of an ABC transporter complex. Responsible for energy coupling to the transport system. The polypeptide is Putative ABC transporter ATP-binding protein PYRAB03730 (Pyrococcus abyssi (strain GE5 / Orsay)).